Here is a 66-residue protein sequence, read N- to C-terminus: MEQGTVKWFNAEKGFGFIERENGDDVFVHFSAIQGDGFKSLDEGQAVTFDVEEGQRGPQAANVQKA.

Residues 4 to 63 (GTVKWFNAEKGFGFIERENGDDVFVHFSAIQGDGFKSLDEGQAVTFDVEEGQRGPQAANV) enclose the CSD domain.

Homodimer.

Its subcellular location is the cytoplasm. The sequence is that of Cold shock-like protein CspLA (cspLA) from Listeria innocua serovar 6a (strain ATCC BAA-680 / CLIP 11262).